We begin with the raw amino-acid sequence, 232 residues long: 2,3-bisphosphoglycerate-dependent phosphoglycerate mutase (232 aa).

Substrate contacts are provided by residues 8-15, 21-22, Arg-60, 87-90, Lys-98, 114-115, and 183-184; these read RHGESLWN, TG, ERHY, RR, and GN. Residue His-9 is the Tele-phosphohistidine intermediate of the active site. The active-site Proton donor/acceptor is the Glu-87.

The protein belongs to the phosphoglycerate mutase family. BPG-dependent PGAM subfamily.

The catalysed reaction is (2R)-2-phosphoglycerate = (2R)-3-phosphoglycerate. It functions in the pathway carbohydrate degradation; glycolysis; pyruvate from D-glyceraldehyde 3-phosphate: step 3/5. Functionally, catalyzes the interconversion of 2-phosphoglycerate and 3-phosphoglycerate. This chain is 2,3-bisphosphoglycerate-dependent phosphoglycerate mutase, found in Clostridium beijerinckii (strain ATCC 51743 / NCIMB 8052) (Clostridium acetobutylicum).